The chain runs to 155 residues: S-ribosylhomocysteine lyase (155 aa).

Residues His53, His57, and Cys121 each coordinate Fe cation.

Belongs to the LuxS family. As to quaternary structure, homodimer. Fe cation is required as a cofactor.

It carries out the reaction S-(5-deoxy-D-ribos-5-yl)-L-homocysteine = (S)-4,5-dihydroxypentane-2,3-dione + L-homocysteine. Its function is as follows. Involved in the synthesis of autoinducer 2 (AI-2) which is secreted by bacteria and is used to communicate both the cell density and the metabolic potential of the environment. The regulation of gene expression in response to changes in cell density is called quorum sensing. Catalyzes the transformation of S-ribosylhomocysteine (RHC) to homocysteine (HC) and 4,5-dihydroxy-2,3-pentadione (DPD). This is S-ribosylhomocysteine lyase from Thermus thermophilus (strain ATCC BAA-163 / DSM 7039 / HB27).